The sequence spans 209 residues: Outer-membrane lipoprotein carrier protein (209 aa).

An N-terminal signal peptide occupies residues 1-24; the sequence is MTRYVISRLSAIALLALAPALALA.

It belongs to the LolA family. In terms of assembly, monomer.

Its subcellular location is the periplasm. Functionally, participates in the translocation of lipoproteins from the inner membrane to the outer membrane. Only forms a complex with a lipoprotein if the residue after the N-terminal Cys is not an aspartate (The Asp acts as a targeting signal to indicate that the lipoprotein should stay in the inner membrane). In Bordetella avium (strain 197N), this protein is Outer-membrane lipoprotein carrier protein.